A 382-amino-acid polypeptide reads, in one-letter code: D-galactonate dehydratase (382 aa).

Mg(2+) is bound at residue aspartate 183. Histidine 185 serves as the catalytic Proton donor. Mg(2+) is bound by residues glutamate 209 and glutamate 235. The Proton acceptor role is filled by histidine 285.

The protein belongs to the mandelate racemase/muconate lactonizing enzyme family. GalD subfamily. It depends on Mg(2+) as a cofactor.

The catalysed reaction is D-galactonate = 2-dehydro-3-deoxy-D-galactonate + H2O. The protein operates within carbohydrate acid metabolism; D-galactonate degradation; D-glyceraldehyde 3-phosphate and pyruvate from D-galactonate: step 1/3. Its function is as follows. Catalyzes the dehydration of D-galactonate to 2-keto-3-deoxy-D-galactonate. The sequence is that of D-galactonate dehydratase from Escherichia coli (strain UTI89 / UPEC).